The chain runs to 554 residues: Phosphomethylpyrimidine synthase (554 aa).

Substrate-binding positions include Asn188, Met217, Tyr246, His282, Ser302–Gly304, Asp343–Arg346, and Glu382. His386 contributes to the Zn(2+) binding site. Residue Tyr409 coordinates substrate. His450 contacts Zn(2+). Residues Cys530, Cys533, and Cys538 each coordinate [4Fe-4S] cluster.

It belongs to the ThiC family. Homodimer. Requires [4Fe-4S] cluster as cofactor.

The enzyme catalyses 5-amino-1-(5-phospho-beta-D-ribosyl)imidazole + S-adenosyl-L-methionine = 4-amino-2-methyl-5-(phosphooxymethyl)pyrimidine + CO + 5'-deoxyadenosine + formate + L-methionine + 3 H(+). It participates in cofactor biosynthesis; thiamine diphosphate biosynthesis. Catalyzes the synthesis of the hydroxymethylpyrimidine phosphate (HMP-P) moiety of thiamine from aminoimidazole ribotide (AIR) in a radical S-adenosyl-L-methionine (SAM)-dependent reaction. The protein is Phosphomethylpyrimidine synthase of Coxiella burnetii (strain CbuK_Q154) (Coxiella burnetii (strain Q154)).